The primary structure comprises 818 residues: Phosphoenolpyruvate synthase (818 aa).

His442 (tele-phosphohistidine intermediate) is an active-site residue. The substrate site is built by Arg532, Arg601, Glu703, Gly724, Ser725, Asn726, and Asp727. Glu703 is a binding site for Mg(2+). Asp727 contacts Mg(2+). Cys774 (proton donor) is an active-site residue.

Belongs to the PEP-utilizing enzyme family. Mg(2+) is required as a cofactor.

The catalysed reaction is pyruvate + ATP + H2O = phosphoenolpyruvate + AMP + phosphate + 2 H(+). Its pathway is carbohydrate biosynthesis; gluconeogenesis. Catalyzes the phosphorylation of pyruvate to phosphoenolpyruvate. The protein is Phosphoenolpyruvate synthase (ppsA) of Synechocystis sp. (strain ATCC 27184 / PCC 6803 / Kazusa).